The primary structure comprises 123 residues: Polyadenylate-binding protein-interacting protein 2B (123 aa).

Position 1 is an N-acetylmethionine (methionine 1). Residues 1 to 13 (MNGSNMANTSPSV) are compositionally biased toward polar residues. 2 disordered regions span residues 1–30 (MNGS…KENP) and 91–123 (NGLS…GEKY). Basic and acidic residues-rich tracts occupy residues 14–30 (KSKE…KENP) and 113–123 (DAKEFIPGEKY).

The protein belongs to the PAIP2 family. As to quaternary structure, interacts (via central acidic portion and C-terminus) with PABPC1 (via the second and third RRM domains and the C-terminus). Post-translationally, ubiquitinated in vitro. In terms of tissue distribution, expressed in brain, cervix, heart, liver, ovary, kidney, prostate and testis.

Inhibits translation of capped and polyadenylated mRNAs by displacing PABPC1 from the poly(A) tail. In Homo sapiens (Human), this protein is Polyadenylate-binding protein-interacting protein 2B (PAIP2B).